Reading from the N-terminus, the 181-residue chain is MKILVVNNYGQFNHLIYRSIKDRVEARMISNETPVEDIVADGLILGGGPSMDRSGRCSEYLRTLDIPVLGICLGLQIMAVTFGGKVEPGKVGGYASVEIEVLEEDGILRGVPHRFMAWASHADQVTICPPEFRVIARSSICDIEAICHESRPLYGVQWHPEVAHTEYGEEVFDNFLEICRR.

One can recognise a Glutamine amidotransferase type-1 domain in the interval 2 to 181 (KILVVNNYGQ…FDNFLEICRR (180 aa)). The Nucleophile role is filled by C72. Active-site residues include H159 and E161.

As to quaternary structure, heterodimer composed of a glutamine amidotransferase subunit (A) and a GMP-binding subunit (B).

It catalyses the reaction XMP + L-glutamine + ATP + H2O = GMP + L-glutamate + AMP + diphosphate + 2 H(+). The protein operates within purine metabolism; GMP biosynthesis; GMP from XMP (L-Gln route): step 1/1. Catalyzes the synthesis of GMP from XMP. The polypeptide is GMP synthase [glutamine-hydrolyzing] subunit A (Methanothrix thermoacetophila (strain DSM 6194 / JCM 14653 / NBRC 101360 / PT) (Methanosaeta thermophila)).